We begin with the raw amino-acid sequence, 955 residues long: Sex determination protein fruitless (955 aa).

Disordered stretches follow at residues 1–55 (MMAT…HAHS) and 70–89 (IETD…LPLP). Residues 35–55 (PHGHGHLHSHAHAHGHGHAHS) are compositionally biased toward basic residues. Residues 76–89 (APPPPLPPPPLPLP) are compositionally biased toward pro residues. A BTB domain is found at 131-196 (CDVTLACEGE…MYKGEVNVGQ (66 aa)). Disordered stretches follow at residues 229 to 288 (LRDS…SMSE), 352 to 526 (NRSA…LGGG), and 784 to 814 (ANHQ…SGAG). A compositionally biased stretch (polar residues) spans 233–246 (AASSPTGRGPSNYT). Composition is skewed to basic and acidic residues over residues 258 to 279 (AMRE…DELT) and 360 to 379 (CSDR…RDDL). Positions 387-420 (KDNNNSNSSSTGGNNNNNNNNNNNSSSNNNNSSS) are enriched in low complexity. Positions 421 to 446 (NRERNNSGERERERERERERDRDREL) are enriched in basic and acidic residues. 2 stretches are compositionally biased toward low complexity: residues 464 to 475 (SSSNCDNSLSSS) and 790 to 814 (QHPP…SGAG). A C2H2-type zinc finger spans residues 918-941 (HECPVCGQKFTRRDNMKAHCKIKH).

Expressed in parts of the adult male brain associated with the courtship song and steps of the male courtship. Also expressed in the larval and pupal male mushroom body and optic lobe. Expressed in pupal female optic lobe.

Its subcellular location is the nucleus. Probably acts as a transcriptional regulator. Part of the somatic sex determination hierarchy; sex determination genes transformer (tra) and transformer-2 (tra-2) switch fru splicing from the male-specific pattern to the female-specific pattern through activation of the female-specific fru 5'-splice site. Vital for the development of males and females. Controls the development of the male specific abdominal muscle of Lawrence. Plays a role in male courtship behavior and sexual orientation. Enhances male-specific expression of takeout in brain-associated fat body. This chain is Sex determination protein fruitless (fru), found in Drosophila melanogaster (Fruit fly).